The following is a 422-amino-acid chain: Aminopentol aminotransferase (422 aa).

K258 carries the post-translational modification N6-(pyridoxal phosphate)lysine.

The protein belongs to the class-III pyridoxal-phosphate-dependent aminotransferase family. Requires pyridoxal 5'-phosphate as cofactor.

It is found in the cytoplasm. The enzyme catalyses (2S,3S,5R,10R,12S,14S,15R,16R)-2-amino-12,16-dimethylicosane-3,5,10,14,15-pentol + pyruvate = (3S,5R,10R,12S,14S,15R,16R)-3,5,10,14,15-pentahydroxy-12,16-dimethylicosan-2-one + L-alanine. In terms of biological role, involved in degradation of fumonisin B1. Catalyzes the deamination of aminopentol (HFB1) to 2-keto-HFB1. Pyruvate is the preferred cosubstrate, but it can also use several other alpha-keto acids as amino group acceptors. This is Aminopentol aminotransferase (fumI) from Sphingopyxis macrogoltabida (Sphingomonas macrogoltabidus).